A 447-amino-acid chain; its full sequence is Argininosuccinate synthase (447 aa).

Residues 17–25 (AFSGGLDTS) and Ala43 contribute to the ATP site. Tyr99 provides a ligand contact to L-citrulline. Residues Gly129 and Thr131 each contribute to the ATP site. L-aspartate is bound by residues Thr131, Asn135, and Asp136. Asn135 contacts L-citrulline. Asp136 serves as a coordination point for ATP. Arg139 and Ser192 together coordinate L-citrulline. Residue Asp194 coordinates ATP. Positions 201, 203, and 280 each coordinate L-citrulline.

This sequence belongs to the argininosuccinate synthase family. Type 2 subfamily. As to quaternary structure, homotetramer.

It localises to the cytoplasm. It carries out the reaction L-citrulline + L-aspartate + ATP = 2-(N(omega)-L-arginino)succinate + AMP + diphosphate + H(+). It participates in amino-acid biosynthesis; L-arginine biosynthesis; L-arginine from L-ornithine and carbamoyl phosphate: step 2/3. The protein is Argininosuccinate synthase of Klebsiella pneumoniae (strain 342).